The following is a 327-amino-acid chain: Putative HTH-type transcriptional regulatory protein Mevan_1514 (327 aa).

An HTH cro/C1-type domain is found at 128-189 (LKETREKLNI…IKGINITDYF (62 aa)). A DNA-binding region (H-T-H motif) is located at residues 139–158 (VGELAEFSRVSRKTIYKYEQ).

The sequence is that of Putative HTH-type transcriptional regulatory protein Mevan_1514 from Methanococcus vannielii (strain ATCC 35089 / DSM 1224 / JCM 13029 / OCM 148 / SB).